The primary structure comprises 218 residues: Adenylate kinase (218 aa).

Residue 10-15 (GAGKGT) coordinates ATP. Residues 30 to 59 (STGDMLRAAVKAGTPLGIEAKKVMDSGGLV) are NMP. Residues Thr31, Arg36, 57 to 59 (GLV), 85 to 88 (GFPR), and Gln92 each bind AMP. Positions 122 to 159 (GRRSHSASGRTYHVKYNPPKVEGLDDVTGEPLIQREDD) are LID. ATP contacts are provided by residues Arg123 and 132-133 (TY). Arg156 and Arg167 together coordinate AMP. Gly203 serves as a coordination point for ATP.

This sequence belongs to the adenylate kinase family. Monomer.

The protein resides in the cytoplasm. The catalysed reaction is AMP + ATP = 2 ADP. Its pathway is purine metabolism; AMP biosynthesis via salvage pathway; AMP from ADP: step 1/1. Its function is as follows. Catalyzes the reversible transfer of the terminal phosphate group between ATP and AMP. Plays an important role in cellular energy homeostasis and in adenine nucleotide metabolism. The polypeptide is Adenylate kinase (Polaromonas naphthalenivorans (strain CJ2)).